The following is a 252-amino-acid chain: Imidazole glycerol phosphate synthase subunit HisF (252 aa).

Active-site residues include Asp11 and Asp130.

This sequence belongs to the HisA/HisF family. In terms of assembly, heterodimer of HisH and HisF.

The protein localises to the cytoplasm. The enzyme catalyses 5-[(5-phospho-1-deoxy-D-ribulos-1-ylimino)methylamino]-1-(5-phospho-beta-D-ribosyl)imidazole-4-carboxamide + L-glutamine = D-erythro-1-(imidazol-4-yl)glycerol 3-phosphate + 5-amino-1-(5-phospho-beta-D-ribosyl)imidazole-4-carboxamide + L-glutamate + H(+). The protein operates within amino-acid biosynthesis; L-histidine biosynthesis; L-histidine from 5-phospho-alpha-D-ribose 1-diphosphate: step 5/9. IGPS catalyzes the conversion of PRFAR and glutamine to IGP, AICAR and glutamate. The HisF subunit catalyzes the cyclization activity that produces IGP and AICAR from PRFAR using the ammonia provided by the HisH subunit. The sequence is that of Imidazole glycerol phosphate synthase subunit HisF from Bacillus velezensis (strain DSM 23117 / BGSC 10A6 / LMG 26770 / FZB42) (Bacillus amyloliquefaciens subsp. plantarum).